Consider the following 266-residue polypeptide: Cell division protein FtsQ (266 aa).

At 1-31 (MRQKTSSNKKKQKNTNNISLRRKLGLMYKKA) the chain is on the cytoplasmic side. A helical transmembrane segment spans residues 32-52 (ILGLKIVLMIFVCLFVFTKYF). Residues 53-266 (TSIKTYLITN…DRNKYYIQKY (214 aa)) lie on the Periplasmic side of the membrane. The region spanning 72-140 (FRLENVIIEG…NTVYIKLFER (69 aa)) is the POTRA domain.

It belongs to the FtsQ/DivIB family. FtsQ subfamily.

It localises to the cell inner membrane. In terms of biological role, essential cell division protein. This is Cell division protein FtsQ from Rickettsia typhi (strain ATCC VR-144 / Wilmington).